We begin with the raw amino-acid sequence, 352 residues long: Fe(3+) ions import ATP-binding protein FbpC (352 aa).

An ABC transporter domain is found at 5–239 (LHIGHLSKSF…PADLDAALFI (235 aa)). 37 to 44 (GASGCGKT) serves as a coordination point for ATP.

It belongs to the ABC transporter superfamily. Fe(3+) ion importer (TC 3.A.1.10) family. The complex is composed of two ATP-binding proteins (FbpC), two transmembrane proteins (FbpB) and a solute-binding protein (FbpA).

It localises to the cell inner membrane. It carries out the reaction Fe(3+)(out) + ATP + H2O = Fe(3+)(in) + ADP + phosphate + H(+). Part of the ABC transporter complex FbpABC involved in Fe(3+) ions import. Responsible for energy coupling to the transport system. This chain is Fe(3+) ions import ATP-binding protein FbpC, found in Neisseria meningitidis serogroup A / serotype 4A (strain DSM 15465 / Z2491).